The sequence spans 506 residues: Anaerobic nitric oxide reductase transcription regulator NorR (506 aa).

A 4-aspartylphosphate modification is found at Asp57. A Sigma-54 factor interaction domain is found at 187–416 (MIGLSPAMTQ…LEHAIHRAVV (230 aa)). Residues 215 to 222 (GETGTGKE) and 278 to 287 (ADNGTLFLDE) each bind ATP. Positions 481–500 (WAASARALETDVANLHRLAK) form a DNA-binding region, H-T-H motif.

It functions in the pathway nitrogen metabolism; nitric oxide reduction. Its function is as follows. Required for the expression of anaerobic nitric oxide (NO) reductase, acts as a transcriptional activator for at least the norVW operon. Activation also requires sigma-54. This chain is Anaerobic nitric oxide reductase transcription regulator NorR, found in Salmonella agona (strain SL483).